The primary structure comprises 310 residues: Alpha/beta hydrolase domain-containing protein 17C (310 aa).

Active-site charge relay system residues include S192, D257, and H286.

This sequence belongs to the AB hydrolase superfamily. ABHD17 family. In terms of processing, palmitoylated on cysteine residues located in a cysteine cluster at the N-terminus which promotes membrane localization.

The protein resides in the recycling endosome membrane. The protein localises to the cell projection. It is found in the dendritic spine. It localises to the postsynaptic density membrane. It carries out the reaction S-hexadecanoyl-L-cysteinyl-[protein] + H2O = L-cysteinyl-[protein] + hexadecanoate + H(+). Hydrolyzes fatty acids from S-acylated cysteine residues in proteins. This chain is Alpha/beta hydrolase domain-containing protein 17C, found in Xenopus tropicalis (Western clawed frog).